Reading from the N-terminus, the 92-residue chain is Small ribosomal subunit protein uS19c (92 aa).

This sequence belongs to the universal ribosomal protein uS19 family.

The protein localises to the plastid. Its subcellular location is the chloroplast. In terms of biological role, protein S19 forms a complex with S13 that binds strongly to the 16S ribosomal RNA. This chain is Small ribosomal subunit protein uS19c, found in Lactuca sativa (Garden lettuce).